Consider the following 145-residue polypeptide: uncharacterized protein (145 aa).

This is an uncharacterized protein from Escherichia coli (strain K12).